Reading from the N-terminus, the 325-residue chain is Hydroxymethylglutaryl-CoA lyase, mitochondrial (325 aa).

Residues 1-27 constitute a mitochondrion transit peptide; it reads MAAMRKALPRRLVGLASLRAVSTSSMG. The region spanning 33 to 300 is the Pyruvate carboxyltransferase domain; sequence VKIVEVGPRD…HTGVNLQKLL (268 aa). Arginine 41 is a substrate binding site. Aspartate 42 lines the a divalent metal cation pocket. Residue lysine 48 is modified to N6-acetyllysine; alternate. N6-succinyllysine; alternate is present on lysine 48. An N6-acetyllysine modification is found at lysine 111. N6-acetyllysine; alternate is present on residues lysine 137 and lysine 179. Residues lysine 137 and lysine 179 each carry the N6-succinyllysine; alternate modification. Residues histidine 233 and histidine 235 each coordinate a divalent metal cation. Residue cysteine 266 is part of the active site. Asparagine 275 contacts a divalent metal cation. The Microbody targeting signal signature appears at 323-325; that stretch reads CKL. Lysine 324 bears the N6-acetyllysine mark.

Belongs to the HMG-CoA lyase family. In terms of assembly, homodimer; disulfide-linked. Can also form homotetramers. It depends on a divalent metal cation as a cofactor. As to expression, highest expression in liver. Expressed in pancreas, kidney, intestine, testis, fibroblasts and lymphoblasts. Very low expression in brain and skeletal muscle. The relative expression of isoform 2 (at mRNA level) is highest in heart (30%), skeletal muscle (22%), and brain (14%).

It localises to the mitochondrion matrix. The protein localises to the peroxisome. The enzyme catalyses (3S)-3-hydroxy-3-methylglutaryl-CoA = acetoacetate + acetyl-CoA. The protein operates within metabolic intermediate metabolism; (S)-3-hydroxy-3-methylglutaryl-CoA degradation; acetoacetate from (S)-3-hydroxy-3-methylglutaryl-CoA: step 1/1. Stimulated by reducing agents such as dithiothreitol (DTT). Mitochondrial 3-hydroxy-3-methylglutaryl-CoA lyase that catalyzes a cation-dependent cleavage of (S)-3-hydroxy-3-methylglutaryl-CoA into acetyl-CoA and acetoacetate, a key step in ketogenesis. Terminal step in leucine catabolism. Ketone bodies (beta-hydroxybutyrate, acetoacetate and acetone) are essential as an alternative source of energy to glucose, as lipid precursors and as regulators of metabolism. The chain is Hydroxymethylglutaryl-CoA lyase, mitochondrial (HMGCL) from Homo sapiens (Human).